The following is a 734-amino-acid chain: Probable inactive histone-lysine N-methyltransferase SUVR1 (734 aa).

Positions 61-163 (QSTEKNKKEE…LPPLKRYVRR (103 aa)) are disordered. Residues 62 to 81 (STEKNKKEEEKKKKEEEKKS) show a composition bias toward basic and acidic residues. The span at 98 to 109 (VQDEEDDMDEDE) shows a compositional bias: acidic residues. Positions 113–122 (KRRLRSRRGR) are enriched in basic residues. Residues 123 to 132 (ASSSSSSSSS) show a composition bias toward low complexity. 8 residues coordinate Zn(2+): C460, C464, C468, C477, C545, C549, C551, and C555. Residues 460-563 (CSTSCIEDCL…RCGNRVVQRG (104 aa)) form the Pre-SET domain. The SET domain occupies 566-696 (NKLQVFFTPN…AMEELAWDYG (131 aa)). S-adenosyl-L-methionine-binding positions include 577–579 (KGW) and 652–653 (NH). Zn(2+) is bound at residue C655. Y695 serves as a coordination point for S-adenosyl-L-methionine. The 17-residue stretch at 707–723 (KPFDCLCGSRFCRNKKR) folds into the Post-SET domain. The Zn(2+) site is built by C711, C713, and C718.

This sequence belongs to the class V-like SAM-binding methyltransferase superfamily. Histone-lysine methyltransferase family. Interacts with SUVR2 and itself.

The protein localises to the nucleus. It is found in the chromosome. Functionally, probable inactive histone-lysine methyltransferase that acts as regulator of transctiptional gene silencing independently of histone H3K9 methylation. Contributes to transcriptional gene silencing at RNA-directed DNA methylation (RdDM) target loci but also at RdDM-independent target loci. The polypeptide is Probable inactive histone-lysine N-methyltransferase SUVR1 (SUVR1) (Arabidopsis thaliana (Mouse-ear cress)).